The chain runs to 180 residues: 4-hydroxy-3-methylbut-2-enyl diphosphate reductase (180 aa).

C12 serves as a coordination point for [4Fe-4S] cluster. (2E)-4-hydroxy-3-methylbut-2-enyl diphosphate contacts are provided by H41 and H74. The dimethylallyl diphosphate site is built by H41 and H74. H41 and H74 together coordinate isopentenyl diphosphate. A [4Fe-4S] cluster-binding site is contributed by C96. H124 provides a ligand contact to (2E)-4-hydroxy-3-methylbut-2-enyl diphosphate. Dimethylallyl diphosphate is bound at residue H124. H124 provides a ligand contact to isopentenyl diphosphate. Residue E126 is the Proton donor of the active site. A (2E)-4-hydroxy-3-methylbut-2-enyl diphosphate-binding site is contributed by T168.

It belongs to the IspH family. [4Fe-4S] cluster serves as cofactor.

It catalyses the reaction isopentenyl diphosphate + 2 oxidized [2Fe-2S]-[ferredoxin] + H2O = (2E)-4-hydroxy-3-methylbut-2-enyl diphosphate + 2 reduced [2Fe-2S]-[ferredoxin] + 2 H(+). It carries out the reaction dimethylallyl diphosphate + 2 oxidized [2Fe-2S]-[ferredoxin] + H2O = (2E)-4-hydroxy-3-methylbut-2-enyl diphosphate + 2 reduced [2Fe-2S]-[ferredoxin] + 2 H(+). It participates in isoprenoid biosynthesis; dimethylallyl diphosphate biosynthesis; dimethylallyl diphosphate from (2E)-4-hydroxy-3-methylbutenyl diphosphate: step 1/1. The protein operates within isoprenoid biosynthesis; isopentenyl diphosphate biosynthesis via DXP pathway; isopentenyl diphosphate from 1-deoxy-D-xylulose 5-phosphate: step 6/6. In terms of biological role, catalyzes the conversion of 1-hydroxy-2-methyl-2-(E)-butenyl 4-diphosphate (HMBPP) into a mixture of isopentenyl diphosphate (IPP) and dimethylallyl diphosphate (DMAPP). Acts in the terminal step of the DOXP/MEP pathway for isoprenoid precursor biosynthesis. The protein is 4-hydroxy-3-methylbut-2-enyl diphosphate reductase of Pseudomonas fluorescens.